Consider the following 402-residue polypeptide: Probable 2,3-bisphosphoglycerate-independent phosphoglycerate mutase (402 aa).

It belongs to the BPG-independent phosphoglycerate mutase family. A-PGAM subfamily.

The enzyme catalyses (2R)-2-phosphoglycerate = (2R)-3-phosphoglycerate. Its pathway is carbohydrate degradation; glycolysis; pyruvate from D-glyceraldehyde 3-phosphate: step 3/5. Catalyzes the interconversion of 2-phosphoglycerate and 3-phosphoglycerate. The protein is Probable 2,3-bisphosphoglycerate-independent phosphoglycerate mutase of Thermosipho africanus (strain TCF52B).